The sequence spans 766 residues: Serine/threonine-protein kinase PLK4 (766 aa).

One can recognise a Protein kinase domain in the interval 14–267 (YEVQHLLGKG…LEAVLCHPFM (254 aa)). ATP-binding positions include 20–28 (LGKGGFAIV) and lysine 43. Aspartate 138 (proton acceptor) is an active-site residue. In terms of domain architecture, Cryptic POLO box 1 (CPB1) spans 379–496 (EDRISVPPLN…ARFVGLVKSK (118 aa)). In terms of domain architecture, Cryptic POLO box 2 (CPB2) spans 497 to 600 (TPKVTYFSTL…GRRPVTDVQP (104 aa)). Positions 658-737 (PIKRINVPDV…IPNIQIKLKT (80 aa)) constitute a POLO box domain.

Belongs to the protein kinase superfamily. Ser/Thr protein kinase family. CDC5/Polo subfamily. As to quaternary structure, homodimer. Ubiquitinated by the SCF(Slimb) ubiquitin ligase complex; leading to its degradation by the proteasome during interphase and regulating centriole number and ensuring the block to centriole reduplication.

The protein localises to the cytoplasm. Its subcellular location is the cytoskeleton. The protein resides in the microtubule organizing center. It localises to the centrosome. It is found in the centriole. It carries out the reaction L-seryl-[protein] + ATP = O-phospho-L-seryl-[protein] + ADP + H(+). The catalysed reaction is L-threonyl-[protein] + ATP = O-phospho-L-threonyl-[protein] + ADP + H(+). Functionally, serine/threonine-protein kinase that plays a central role in centriole duplication. Able to trigger procentriole formation on the surface of the mother centriole cylinder, using mother centriole as a platform, leading to the recruitment of centriole biogenesis proteins such as sas-6. When overexpressed, it is able to induce centrosome amplification through the simultaneous generation of multiple procentrioles adjoining each parental centriole during S phase. Centrosome amplification following overexpression can initiate tumorigenesis, highlighting the importance of centrosome regulation in cancers. This is Serine/threonine-protein kinase PLK4 (SAK) from Drosophila yakuba (Fruit fly).